The chain runs to 194 residues: Adenylate kinase (194 aa).

11–16 (GSGKGT) is a binding site for ATP. The segment at 31-60 (STGELLRAEIKAQTELGQAAAGYINEGHLV) is NMP. AMP is bound by residues Thr32, Arg37, 58-60 (HLV), 86-89 (GFPR), and Gln93. The LID stretch occupies residues 127–137 (NRGKISGRSDD). Arg128 lines the ATP pocket. Positions 134 and 145 each coordinate AMP. Position 173 (Gly173) interacts with ATP.

This sequence belongs to the adenylate kinase family. Monomer.

Its subcellular location is the cytoplasm. The enzyme catalyses AMP + ATP = 2 ADP. The protein operates within purine metabolism; AMP biosynthesis via salvage pathway; AMP from ADP: step 1/1. Catalyzes the reversible transfer of the terminal phosphate group between ATP and AMP. Plays an important role in cellular energy homeostasis and in adenine nucleotide metabolism. The sequence is that of Adenylate kinase from Porphyromonas gingivalis (strain ATCC 33277 / DSM 20709 / CIP 103683 / JCM 12257 / NCTC 11834 / 2561).